We begin with the raw amino-acid sequence, 756 residues long: Deoxynucleotidyltransferase terminal-interacting protein 2 (756 aa).

The segment at Met1 to His99 is disordered. Positions Ala9–Ser21 are enriched in low complexity. Ser21 carries the phosphoserine modification. Composition is skewed to polar residues over residues Pro35–Gln55 and Glu80–Val96. Phosphoserine is present on Ser117. The residue at position 129 (Thr129) is a Phosphothreonine. 5 positions are modified to phosphoserine: Ser141, Ser145, Ser148, Ser184, and Ser194. The tract at residues Pro156–Tyr261 is disordered. The segment covering Arg201–Lys211 has biased composition (basic residues). Glycyl lysine isopeptide (Lys-Gly) (interchain with G-Cter in SUMO2) cross-links involve residues Lys217 and Lys220. Thr232 is modified (phosphothreonine). 3 positions are modified to phosphoserine: Ser239, Ser251, and Ser253. The span at Arg242 to Asn256 shows a compositional bias: polar residues. Glycyl lysine isopeptide (Lys-Gly) (interchain with G-Cter in SUMO2) cross-links involve residues Lys257, Lys316, and Lys321. Phosphoserine is present on residues Ser324 and Ser330. Lys345 participates in a covalent cross-link: Glycyl lysine isopeptide (Lys-Gly) (interchain with G-Cter in SUMO2). The residue at position 381 (Ser381) is a Phosphoserine. A Glycyl lysine isopeptide (Lys-Gly) (interchain with G-Cter in SUMO2) cross-link involves residue Lys384. 2 positions are modified to phosphoserine: Ser434 and Ser512. Residues Leu505–Phe542 are a coiled coil. The interval Lys510–Asp547 is disordered. The tract at residues Phe548–Gln605 is tdBR region; mediates interaction with DNTT. Lys558 is covalently cross-linked (Glycyl lysine isopeptide (Lys-Gly) (interchain with G-Cter in SUMO2)). The residue at position 569 (Ser569) is a Phosphoserine. Glycyl lysine isopeptide (Lys-Gly) (interchain with G-Cter in SUMO2) cross-links involve residues Lys584 and Lys606. Thr610 is modified (phosphothreonine). Glycyl lysine isopeptide (Lys-Gly) (interchain with G-Cter in SUMO2) cross-links involve residues Lys626, Lys649, Lys658, Lys686, and Lys731.

In terms of assembly, forms a ternary complex with DNTT and core histone; interaction with PCNA releases DNTT and H2A/H2B histones from this ternary complex. Interacts with ESR1, ESR2, PPARG and RXRA. Part of the small subunit (SSU) processome, composed of more than 70 proteins and the RNA chaperone small nucleolar RNA (snoRNA) U3. In terms of tissue distribution, widely expressed with higher levels in testis.

The protein localises to the nucleus. Its subcellular location is the nucleolus. Its function is as follows. Regulates the transcriptional activity of DNTT and ESR1. May function as a chromatin remodeling protein. Part of the small subunit (SSU) processome, first precursor of the small eukaryotic ribosomal subunit. During the assembly of the SSU processome in the nucleolus, many ribosome biogenesis factors, an RNA chaperone and ribosomal proteins associate with the nascent pre-rRNA and work in concert to generate RNA folding, modifications, rearrangements and cleavage as well as targeted degradation of pre-ribosomal RNA by the RNA exosome. The polypeptide is Deoxynucleotidyltransferase terminal-interacting protein 2 (Homo sapiens (Human)).